Consider the following 69-residue polypeptide: U2-agatoxin-Ao1o (69 aa).

The first 20 residues, methionine 1–alanine 20, serve as a signal peptide directing secretion. Residues valine 21 to arginine 34 constitute a propeptide that is removed on maturation. Disulfide bonds link cysteine 36–cysteine 52, cysteine 43–cysteine 57, and cysteine 51–cysteine 67. Leucine amide is present on leucine 68.

This sequence belongs to the neurotoxin 01 (U2-agtx) family. As to expression, expressed by the venom gland.

The protein resides in the secreted. Its function is as follows. Insect active toxin causing rapid but reversible paralysis in crickets. No activity shown in mammals. Does not show effect on mammalian voltage-gated calcium channels. In Agelena orientalis (Funnel-web spider), this protein is U2-agatoxin-Ao1o.